A 132-amino-acid chain; its full sequence is uncharacterized protein (132 aa).

A helical membrane pass occupies residues 66–86; sequence LPPMLLVLAALFVKGLIPLVL.

The protein resides in the membrane. This is an uncharacterized protein from Saccharomyces cerevisiae (strain ATCC 204508 / S288c) (Baker's yeast).